Consider the following 757-residue polypeptide: uncharacterized protein (757 aa).

The S1 motif domain occupies 640 to 709 (GMILEGVVSN…ARKRIALTMR (70 aa)). A compositionally biased stretch (basic and acidic residues) spans 710-741 (LDDEPGGAKHKMPSENRSRERTAGRKPQRNDR). Positions 710–757 (LDDEPGGAKHKMPSENRSRERTAGRKPQRNDRAPANSAMADAFAKLKR) are disordered.

This is an uncharacterized protein from Neisseria meningitidis serogroup A / serotype 4A (strain DSM 15465 / Z2491).